Consider the following 117-residue polypeptide: Large ribosomal subunit protein eL34 (117 aa).

It belongs to the eukaryotic ribosomal protein eL34 family. As to quaternary structure, component of the large ribosomal subunit.

It is found in the cytoplasm. It localises to the cytosol. The protein resides in the endoplasmic reticulum. Component of the large ribosomal subunit. The ribosome is a large ribonucleoprotein complex responsible for the synthesis of proteins in the cell. This chain is Large ribosomal subunit protein eL34 (rpl34), found in Ictalurus punctatus (Channel catfish).